A 700-amino-acid chain; its full sequence is Chondroitinase-AC (700 aa).

Positions 1-22 (MKKLFVTCIVFFSILSPALLIA) are cleaved as a signal peptide. Catalysis depends on residues His225, Tyr234, and Arg288. O-linked (Man...) serine glycosylation is present at Ser328. Ca(2+)-binding residues include Glu405, Asp407, Asp416, and Tyr417. The O-linked (Man...) serine glycan is linked to Ser455.

This sequence belongs to the polysaccharide lyase 8 family. In terms of assembly, monomer. Requires Ca(2+) as cofactor.

It catalyses the reaction Eliminative degradation of polysaccharides containing 1,4-beta-D-hexosaminyl and 1,3-beta-D-glucuronosyl linkages to disaccharides containing 4-deoxy-beta-D-gluc-4-enuronosyl groups.. The protein is Chondroitinase-AC (cslA) of Pedobacter heparinus (strain ATCC 13125 / DSM 2366 / CIP 104194 / JCM 7457 / NBRC 12017 / NCIMB 9290 / NRRL B-14731 / HIM 762-3).